Consider the following 386-residue polypeptide: Cystathionine gamma-synthase (386 aa).

K198 is modified (N6-(pyridoxal phosphate)lysine).

It belongs to the trans-sulfuration enzymes family. As to quaternary structure, homotetramer. The cofactor is pyridoxal 5'-phosphate.

The protein localises to the cytoplasm. It catalyses the reaction O-succinyl-L-homoserine + L-cysteine = L,L-cystathionine + succinate + H(+). The protein operates within amino-acid biosynthesis; L-methionine biosynthesis via de novo pathway; L-cystathionine from O-succinyl-L-homoserine: step 1/1. Its function is as follows. Catalyzes the formation of L-cystathionine from O-succinyl-L-homoserine (OSHS) and L-cysteine, via a gamma-replacement reaction. In the absence of thiol, catalyzes gamma-elimination to form 2-oxobutanoate, succinate and ammonia. This chain is Cystathionine gamma-synthase (metB), found in Escherichia coli (strain K12).